The sequence spans 326 residues: Beta-ketoacyl-[acyl-carrier-protein] synthase III (326 aa).

Catalysis depends on residues Cys-111 and His-253. The ACP-binding stretch occupies residues 254–258; the sequence is QANSR. Residue Asn-283 is part of the active site.

It belongs to the thiolase-like superfamily. FabH family. As to quaternary structure, homodimer.

The protein localises to the cytoplasm. It carries out the reaction malonyl-[ACP] + acetyl-CoA + H(+) = 3-oxobutanoyl-[ACP] + CO2 + CoA. It functions in the pathway lipid metabolism; fatty acid biosynthesis. Its function is as follows. Catalyzes the condensation reaction of fatty acid synthesis by the addition to an acyl acceptor of two carbons from malonyl-ACP. Catalyzes the first condensation reaction which initiates fatty acid synthesis and may therefore play a role in governing the total rate of fatty acid production. Possesses both acetoacetyl-ACP synthase and acetyl transacylase activities. Its substrate specificity determines the biosynthesis of branched-chain and/or straight-chain of fatty acids. The protein is Beta-ketoacyl-[acyl-carrier-protein] synthase III of Latilactobacillus sakei subsp. sakei (strain 23K) (Lactobacillus sakei subsp. sakei).